Reading from the N-terminus, the 69-residue chain is Cytochrome c oxidase subunit 8A, mitochondrial (69 aa).

A mitochondrion-targeting transit peptide spans 1 to 25 (MSVLTPLLLRGLTGSARRLPVPRAK). An SIFI-degron motif is present at residues 2-19 (SVLTPLLLRGLTGSARRL). Residues 26–36 (IHSLPPEGKLG) are Mitochondrial matrix-facing. Residues 37-60 (IMELAVGLTSCFVTFLLPAGWILS) form a helical membrane-spanning segment. The Mitochondrial intermembrane segment spans residues 61–69 (HLETYRRPE).

The protein belongs to the cytochrome c oxidase VIII family. Component of the cytochrome c oxidase (complex IV, CIV), a multisubunit enzyme composed of 14 subunits. The complex is composed of a catalytic core of 3 subunits MT-CO1, MT-CO2 and MT-CO3, encoded in the mitochondrial DNA, and 11 supernumerary subunits COX4I1 (or COX4I2), COX5A, COX5B, COX6A1 (or COX6A2), COX6B1 (or COX6B2), COX6C, COX7A2 (or COX7A1), COX7B, COX7C, COX8A and NDUFA4, which are encoded in the nuclear genome. The complex exists as a monomer or a dimer and forms supercomplexes (SCs) in the inner mitochondrial membrane with NADH-ubiquinone oxidoreductase (complex I, CI) and ubiquinol-cytochrome c oxidoreductase (cytochrome b-c1 complex, complex III, CIII), resulting in different assemblies (supercomplex SCI(1)III(2)IV(1) and megacomplex MCI(2)III(2)IV(2)). In response to mitochondrial stress, the precursor protein is ubiquitinated by the SIFI complex in the cytoplasm before mitochondrial import, leading to its degradation. Within the SIFI complex, UBR4 initiates ubiquitin chain that are further elongated or branched by KCMF1. As to expression, widely expressed.

The protein resides in the mitochondrion inner membrane. It functions in the pathway energy metabolism; oxidative phosphorylation. Component of the cytochrome c oxidase, the last enzyme in the mitochondrial electron transport chain which drives oxidative phosphorylation. The respiratory chain contains 3 multisubunit complexes succinate dehydrogenase (complex II, CII), ubiquinol-cytochrome c oxidoreductase (cytochrome b-c1 complex, complex III, CIII) and cytochrome c oxidase (complex IV, CIV), that cooperate to transfer electrons derived from NADH and succinate to molecular oxygen, creating an electrochemical gradient over the inner membrane that drives transmembrane transport and the ATP synthase. Cytochrome c oxidase is the component of the respiratory chain that catalyzes the reduction of oxygen to water. Electrons originating from reduced cytochrome c in the intermembrane space (IMS) are transferred via the dinuclear copper A center (CU(A)) of subunit 2 and heme A of subunit 1 to the active site in subunit 1, a binuclear center (BNC) formed by heme A3 and copper B (CU(B)). The BNC reduces molecular oxygen to 2 water molecules using 4 electrons from cytochrome c in the IMS and 4 protons from the mitochondrial matrix. The chain is Cytochrome c oxidase subunit 8A, mitochondrial (COX8A) from Homo sapiens (Human).